A 310-amino-acid polypeptide reads, in one-letter code: Aspartate carbamoyltransferase catalytic subunit (310 aa).

Carbamoyl phosphate contacts are provided by Arg58 and Thr59. Position 86 (Lys86) interacts with L-aspartate. Carbamoyl phosphate-binding residues include Arg108, His137, and Gln140. L-aspartate contacts are provided by Arg170 and Arg225. Gly264 and Pro265 together coordinate carbamoyl phosphate.

It belongs to the aspartate/ornithine carbamoyltransferase superfamily. ATCase family. In terms of assembly, heterododecamer (2C3:3R2) of six catalytic PyrB chains organized as two trimers (C3), and six regulatory PyrI chains organized as three dimers (R2).

The enzyme catalyses carbamoyl phosphate + L-aspartate = N-carbamoyl-L-aspartate + phosphate + H(+). It functions in the pathway pyrimidine metabolism; UMP biosynthesis via de novo pathway; (S)-dihydroorotate from bicarbonate: step 2/3. Its function is as follows. Catalyzes the condensation of carbamoyl phosphate and aspartate to form carbamoyl aspartate and inorganic phosphate, the committed step in the de novo pyrimidine nucleotide biosynthesis pathway. The chain is Aspartate carbamoyltransferase catalytic subunit from Coxiella burnetii (strain CbuG_Q212) (Coxiella burnetii (strain Q212)).